Reading from the N-terminus, the 141-residue chain is ATP synthase epsilon chain (141 aa).

Belongs to the ATPase epsilon chain family. In terms of assembly, F-type ATPases have 2 components, CF(1) - the catalytic core - and CF(0) - the membrane proton channel. CF(1) has five subunits: alpha(3), beta(3), gamma(1), delta(1), epsilon(1). CF(0) has three main subunits: a, b and c.

Its subcellular location is the cell inner membrane. Produces ATP from ADP in the presence of a proton gradient across the membrane. This chain is ATP synthase epsilon chain, found in Burkholderia ambifaria (strain ATCC BAA-244 / DSM 16087 / CCUG 44356 / LMG 19182 / AMMD) (Burkholderia cepacia (strain AMMD)).